Reading from the N-terminus, the 993-residue chain is Signal peptide, CUB and EGF-like domain-containing protein 3 (993 aa).

The signal sequence occupies residues methionine 1 to alanine 20. An EGF-like 1; calcium-binding domain is found at aspartate 29–lysine 69. Disulfide bonds link cysteine 33–cysteine 46, cysteine 40–cysteine 55, cysteine 57–cysteine 68, cysteine 74–cysteine 86, cysteine 82–cysteine 95, cysteine 97–cysteine 110, cysteine 116–cysteine 127, cysteine 123–cysteine 136, cysteine 161–cysteine 172, cysteine 168–cysteine 182, cysteine 184–cysteine 197, cysteine 201–cysteine 212, cysteine 208–cysteine 221, cysteine 223–cysteine 236, cysteine 240–cysteine 251, cysteine 247–cysteine 260, cysteine 262–cysteine 275, cysteine 281–cysteine 292, cysteine 288–cysteine 301, cysteine 303–cysteine 316, cysteine 322–cysteine 332, cysteine 328–cysteine 341, cysteine 343–cysteine 355, cysteine 361–cysteine 372, cysteine 368–cysteine 381, and cysteine 383–cysteine 397. The region spanning aspartate 70–leucine 111 is the EGF-like 2; calcium-binding domain. One can recognise an EGF-like 3; calcium-binding domain in the interval aspartate 112–glutamine 148. 3 consecutive EGF-like domains span residues glutamate 157–lysine 198, leucine 199–isoleucine 237, and glutamate 238–lysine 276. In terms of domain architecture, EGF-like 7; calcium-binding spans aspartate 277–glutamine 317. The EGF-like 8; calcium-binding domain maps to aspartate 318 to glycine 356. The 42-residue stretch at aspartate 357–threonine 398 folds into the EGF-like 9; calcium-binding domain. 5 N-linked (GlcNAc...) asparagine glycosylation sites follow: asparagine 417, asparagine 464, asparagine 685, asparagine 756, and asparagine 785. Cystine bridges form between cysteine 804/cysteine 830 and cysteine 857/cysteine 878. Residues cysteine 804–tyrosine 916 enclose the CUB domain.

In terms of assembly, forms homooligomers. Forms heterooligomers with SCUBE1 and SCUBE2. Interacts with TGFBR2 through the CUB domain; this interaction does not affect TGFB1-binding to TGFBR2. Interacts with BMP2, BMP4 and BMP7; the interaction is mediated by the CUB domain. Interacts with BMPR1A, BMPR1B and BMPR2; the interaction with BMPR1A and BMPR1B is BMP2- and BMP4-dependent. In terms of processing, N-glycosylated. Post-translationally, proteolytic cleavage produces a CUB-containing C-terminal fragment that retains the ability to bind to TGFBR2. This reaction is catalyzed in vitro by MMP2 and, to a lesser extent, by MMP9. In terms of tissue distribution, highly expressed in osteoblasts. In normal lung, mainly expressed in bronchial epithelial cells. Tends to be up-regulated in lung cancer cells.

It is found in the secreted. The protein resides in the cell surface. Is a positive regulator of the BMP signaling pathway, required for proper chondrogenesis, osteogenesis and skeletal development. It acts as a coreceptor for BMP ligands, particularly BMP2 and BMP4, facilitating their interactions with BMP type I receptors. It is required for ligand-induced recruitment of BMP receptors to lipid rafts. Binds to TGFBR2 and activates TGFB signaling. In lung cancer cells, could serve as an endogenous autocrine and paracrine ligand of TGFBR2, which could regulate TGFBR2 signaling and hence modulate epithelial-mesenchymal transition and cancer progression. This chain is Signal peptide, CUB and EGF-like domain-containing protein 3, found in Homo sapiens (Human).